Reading from the N-terminus, the 108-residue chain is Putative membrane protein insertion efficiency factor (108 aa).

The protein belongs to the UPF0161 family.

Its subcellular location is the cell inner membrane. In terms of biological role, could be involved in insertion of integral membrane proteins into the membrane. The chain is Putative membrane protein insertion efficiency factor from Chelativorans sp. (strain BNC1).